We begin with the raw amino-acid sequence, 242 residues long: Sugar fermentation stimulation protein homolog (242 aa).

This sequence belongs to the SfsA family.

The protein is Sugar fermentation stimulation protein homolog of Methanosphaera stadtmanae (strain ATCC 43021 / DSM 3091 / JCM 11832 / MCB-3).